Consider the following 603-residue polypeptide: Adenine deaminase (603 aa).

The protein belongs to the metallo-dependent hydrolases superfamily. Adenine deaminase family. Homodimer. Mn(2+) serves as cofactor.

It catalyses the reaction adenine + H2O + H(+) = hypoxanthine + NH4(+). The polypeptide is Adenine deaminase (Klebsiella pneumoniae subsp. pneumoniae (strain ATCC 700721 / MGH 78578)).